A 365-amino-acid polypeptide reads, in one-letter code: Peptide chain release factor 2 (365 aa).

Residue Gln-251 is modified to N5-methylglutamine.

The protein belongs to the prokaryotic/mitochondrial release factor family. Methylated by PrmC. Methylation increases the termination efficiency of RF2.

It is found in the cytoplasm. Peptide chain release factor 2 directs the termination of translation in response to the peptide chain termination codons UGA and UAA. The protein is Peptide chain release factor 2 of Campylobacter jejuni (strain RM1221).